Consider the following 360-residue polypeptide: Protein DVR-1 (360 aa).

The signal sequence occupies residues 1 to 16 (MVWLRLWAFLHILAIV). A propeptide spanning residues 17-246 (TLDPELKRRE…LRCKRPRRKR (230 aa)) is cleaved from the precursor. N-linked (GlcNAc...) asparagine glycans are attached at residues asparagine 113, asparagine 181, and asparagine 301. 3 disulfide bridges follow: cysteine 259/cysteine 325, cysteine 288/cysteine 357, and cysteine 292/cysteine 359.

The protein belongs to the TGF-beta family. Homodimer. As to expression, vegetal region of the egg.

Its subcellular location is the secreted. Functionally, serves to facilitate the differentiation of either mesoderm or endoderm either as a cofactor in an instructive signal or by providing permissive environment. This is Protein DVR-1 (dvr1) from Xenopus laevis (African clawed frog).